The chain runs to 671 residues: DNA ligase (671 aa).

NAD(+) contacts are provided by residues 32-36, 81-82, and Glu-113; these read DAEYD and SL. Lys-115 serves as the catalytic N6-AMP-lysine intermediate. Positions 136, 173, 290, and 314 each coordinate NAD(+). Residues Cys-408, Cys-411, Cys-426, and Cys-432 each coordinate Zn(2+). The BRCT domain occupies 593–671; sequence EIDSPFAGKT…EAEMLRLLGS (79 aa).

It belongs to the NAD-dependent DNA ligase family. LigA subfamily. The cofactor is Mg(2+). Requires Mn(2+) as cofactor.

It catalyses the reaction NAD(+) + (deoxyribonucleotide)n-3'-hydroxyl + 5'-phospho-(deoxyribonucleotide)m = (deoxyribonucleotide)n+m + AMP + beta-nicotinamide D-nucleotide.. Functionally, DNA ligase that catalyzes the formation of phosphodiester linkages between 5'-phosphoryl and 3'-hydroxyl groups in double-stranded DNA using NAD as a coenzyme and as the energy source for the reaction. It is essential for DNA replication and repair of damaged DNA. This is DNA ligase from Escherichia coli (strain SE11).